The primary structure comprises 815 residues: Protein pygopus (815 aa).

2 disordered regions span residues 1 to 107 and 147 to 711; these read MTHN…QVSA and GMGG…GPMG. Positions 39–45 match the Nuclear localization signal motif; sequence PKKRRKT. Residues 46–73 show a composition bias toward low complexity; that stretch reads SSAANSAAAVAAAAAAAAAANSMQQQQA. Residues 74–86 are compositionally biased toward pro residues; that stretch reads PPTPQDLLPPPPM. Low complexity predominate over residues 188–199; it reads RGMSPMHPHQMG. Gly residues-rich tracts occupy residues 230–248 and 257–269; these read PMGG…GMGG and GMGG…GGPN. The segment covering 307–316 has biased composition (pro residues); that stretch reads LGPPSGPGPG. 4 stretches are compositionally biased toward low complexity: residues 323–341, 407–424, 444–478, and 495–545; these read GPQQ…NGQM, SNNN…NQNP, PSVS…VPTS, and GPSP…HQQH. The segment covering 569–580 has biased composition (pro residues); sequence PQQPSHLGPPHP. Residues 602-621 are compositionally biased toward gly residues; the sequence is GGPGMHGGPAGMPPHMGGGP. Positions 622–636 are enriched in low complexity; the sequence is NPHMMGGPHGNAGPH. Residues 640 to 656 are compositionally biased toward gly residues; that stretch reads GHMGGVPGPGPGPGGMN. Basic residues predominate over residues 663-675; the sequence is MSPHHGHPHHHHN. The span at 678 to 711 shows a compositional bias: gly residues; that stretch reads GGPGPNMFGGGGGGPMGPGGPMGNMGPMGGGPMG. The PHD-type zinc-finger motif lies at 747–805; that stretch reads IYPCGMCHKEVNDNDEAVFCESGCNFFFHRTCVGLTEAAFQMLNKEVFAEWCCDKCVSS.

In terms of assembly, binds to BCL9 via the PHD-type zinc finger motif, and thereby becomes part of the nuclear ARM/PAN complex. In terms of tissue distribution, ubiquitous throughout embryogenesis and larval development.

Its subcellular location is the nucleus. Functionally, involved in signal transduction through the Wnt pathway. The polypeptide is Protein pygopus (pygo) (Drosophila melanogaster (Fruit fly)).